Consider the following 227-residue polypeptide: Protein MobD (227 aa).

The polypeptide is Protein MobD (mobD) (Acidithiobacillus ferrooxidans (Thiobacillus ferrooxidans)).